The primary structure comprises 146 residues: MNIMPVSESLMADWLGLRKLLWPDHDEAHLQEMQRLLQQTQSLQLLAYSDTQQAIAMLEASIRYEYVNGTQTSPVAFLEGIYVLPDYRRSGIATHLVQQVEAWAKPFGCIEFASDAALDNRISHAMHQALGFHETERVVYFKKHIG.

Residues 1 to 146 (MNIMPVSESL…RVVYFKKHIG (146 aa)) form the N-acetyltransferase domain. Residues W22, H25, Y66, and E79 each contribute to the substrate site. 81–83 (IYV) is an acetyl-CoA binding site. Residue D115 coordinates substrate. Acetyl-CoA is bound at residue N120. Residue E136 coordinates substrate.

In terms of assembly, homodimer.

It carries out the reaction kanamycin B + acetyl-CoA = N(6')-acetylkanamycin B + CoA + H(+). Its function is as follows. Catalyzes the transfer of an acetyl group from acetyl-CoA to the 6'-amino group of aminoglycoside molecules conferring resistance to antibiotics containing the purpurosamine ring including amikacin, kanamycin, tobramycin and netilmicin. The chain is Aminoglycoside N(6')-acetyltransferase type 1 from Acinetobacter genomosp. 13.